Consider the following 80-residue polypeptide: uncharacterized protein (80 aa).

Its function is as follows. Essential for virus function. This is an uncharacterized protein from Sulfolobus spindle-shape virus 1 (SSV1).